A 232-amino-acid polypeptide reads, in one-letter code: LexA repressor (232 aa).

The segment at residues 26–46 (FDEMKDALDLRSKSGIHRLIT) is a DNA-binding region (H-T-H motif). Residues Ser153 and Lys191 each act as for autocatalytic cleavage activity in the active site.

The protein belongs to the peptidase S24 family. Homodimer.

The enzyme catalyses Hydrolysis of Ala-|-Gly bond in repressor LexA.. In terms of biological role, represses a number of genes involved in the response to DNA damage (SOS response), including recA and lexA. In the presence of single-stranded DNA, RecA interacts with LexA causing an autocatalytic cleavage which disrupts the DNA-binding part of LexA, leading to derepression of the SOS regulon and eventually DNA repair. This Bradyrhizobium sp. (strain BTAi1 / ATCC BAA-1182) protein is LexA repressor.